The following is a 170-amino-acid chain: NADH-quinone oxidoreductase subunit B (170 aa).

[4Fe-4S] cluster-binding residues include Cys46, Cys47, Cys111, and Cys141.

The protein belongs to the complex I 20 kDa subunit family. NDH-1 is composed of 14 different subunits. Subunits NuoB, C, D, E, F, and G constitute the peripheral sector of the complex. [4Fe-4S] cluster is required as a cofactor.

It localises to the cell membrane. The enzyme catalyses a quinone + NADH + 5 H(+)(in) = a quinol + NAD(+) + 4 H(+)(out). Its function is as follows. NDH-1 shuttles electrons from NADH, via FMN and iron-sulfur (Fe-S) centers, to quinones in the respiratory chain. The immediate electron acceptor for the enzyme in this species is believed to be a menaquinone. Couples the redox reaction to proton translocation (for every two electrons transferred, four hydrogen ions are translocated across the cytoplasmic membrane), and thus conserves the redox energy in a proton gradient. The chain is NADH-quinone oxidoreductase subunit B from Geobacillus thermodenitrificans (strain NG80-2).